Here is a 1003-residue protein sequence, read N- to C-terminus: SWI/SNF-related matrix-associated actin-dependent regulator of chromatin subfamily A containing DEAD/H box 1 (1003 aa).

Disordered stretches follow at residues 15-130 (KKID…SKYK), 172-235 (GSSR…HFPD), and 274-351 (AKKE…EDYS). Composition is skewed to basic and acidic residues over residues 172 to 188 (GSSRKRKLDEVPKDSSP), 221 to 235 (KQEASVKKLQRHFPD), and 274 to 294 (AKKEVSNGKEFSRSNKNDNKS). The region spanning 221–264 (KQEASVKKLQRHFPDLDKEELREVLQEHDWSFHEALEALKLFAE) is the CUE domain. Positions 295-311 (SAKAKANQNSNKAMAQN) are enriched in low complexity. Positions 321 to 333 (KYSENAKRDTRDL) are enriched in basic and acidic residues. The Helicase ATP-binding domain maps to 486–654 (ALLHKHKVNM…MSLLNFVMPH (169 aa)). 499 to 506 (DEMGLGKT) is an ATP binding site. Residues 605–608 (DEGH) carry the DEGH box motif. In terms of domain architecture, Helicase C-terminal spans 835-997 (ILEKLLSDIK…TIPLDMATLL (163 aa)).

It belongs to the SNF2/RAD54 helicase family.

It localises to the nucleus. The protein resides in the chromosome. The catalysed reaction is ATP + H2O = ADP + phosphate + H(+). Its function is as follows. DNA helicase that possesses intrinsic ATP-dependent nucleosome-remodeling activity and is both required for DNA repair and heterochromatin organization. Promotes DNA end resection of double-strand breaks (DSBs) following DNA damage: probably acts by weakening histone DNA interactions in nucleosomes flanking DSBs. Required for the restoration of heterochromatin organization after replication. This is SWI/SNF-related matrix-associated actin-dependent regulator of chromatin subfamily A containing DEAD/H box 1 (smarcad1) from Xenopus tropicalis (Western clawed frog).